A 265-amino-acid chain; its full sequence is uncharacterized protein (265 aa).

A Phosphoserine modification is found at Ser-223.

This is an uncharacterized protein from Saccharomyces cerevisiae (strain ATCC 204508 / S288c) (Baker's yeast).